Consider the following 200-residue polypeptide: Thymidine kinase (200 aa).

ATP-binding positions include 9-16 (STMNAGKS) and 88-91 (DEAH). Glu-89 functions as the Proton acceptor in the catalytic mechanism. Residues Cys-146, Cys-148, Cys-183, and His-186 each coordinate Zn(2+).

The protein belongs to the thymidine kinase family. Homotetramer.

The protein resides in the cytoplasm. The catalysed reaction is thymidine + ATP = dTMP + ADP + H(+). This chain is Thymidine kinase, found in Rhizobium etli (strain ATCC 51251 / DSM 11541 / JCM 21823 / NBRC 15573 / CFN 42).